Reading from the N-terminus, the 165-residue chain is MPLNREDKQAVVAEVAAQVAKAQTVVLAEYRGIAVGDLTTLRAKAREQKVYLRVLKNTLARRAVEGTPFAPLAEQMTGPLIYGISEDAIAAAKVVHDFSKSNDKLVIKAGSYDGKVMDKAGVQALASIPSREELLSKLLFVMQAPVSGFARALAALAEKKQAEAA.

Belongs to the universal ribosomal protein uL10 family. As to quaternary structure, part of the ribosomal stalk of the 50S ribosomal subunit. The N-terminus interacts with L11 and the large rRNA to form the base of the stalk. The C-terminus forms an elongated spine to which L12 dimers bind in a sequential fashion forming a multimeric L10(L12)X complex.

Its function is as follows. Forms part of the ribosomal stalk, playing a central role in the interaction of the ribosome with GTP-bound translation factors. The sequence is that of Large ribosomal subunit protein uL10 from Burkholderia mallei (strain NCTC 10229).